We begin with the raw amino-acid sequence, 339 residues long: D-erythrose-4-phosphate dehydrogenase (339 aa).

An NAD(+)-binding site is contributed by 12–13; the sequence is RI. Residues 154–156, Arg200, 213–214, and Arg236 contribute to the substrate site; these read SCT and TK. Cys155 (nucleophile) is an active-site residue. Asn318 is an NAD(+) binding site.

It belongs to the glyceraldehyde-3-phosphate dehydrogenase family. Epd subfamily. As to quaternary structure, homotetramer.

It is found in the cytoplasm. It catalyses the reaction D-erythrose 4-phosphate + NAD(+) + H2O = 4-phospho-D-erythronate + NADH + 2 H(+). It functions in the pathway cofactor biosynthesis; pyridoxine 5'-phosphate biosynthesis; pyridoxine 5'-phosphate from D-erythrose 4-phosphate: step 1/5. Its function is as follows. Catalyzes the NAD-dependent conversion of D-erythrose 4-phosphate to 4-phosphoerythronate. The sequence is that of D-erythrose-4-phosphate dehydrogenase from Photorhabdus laumondii subsp. laumondii (strain DSM 15139 / CIP 105565 / TT01) (Photorhabdus luminescens subsp. laumondii).